We begin with the raw amino-acid sequence, 429 residues long: Fc receptor-like protein 1 (429 aa).

The N-terminal stretch at 1–16 (MLPRLLLLICAPLCEP) is a signal peptide. Ig-like C2-type domains follow at residues 17–104 (AELF…SQIN), 109–200 (PVAD…VSIT), and 208–291 (PILM…EAVT). The Extracellular segment spans residues 17–307 (AELFLIASPS…TGARSNHLTS (291 aa)). Disulfide bonds link Cys38–Cys86, Cys134–Cys183, and Cys229–Cys276. The N-linked (GlcNAc...) asparagine glycan is linked to Asn293. The chain crosses the membrane as a helical span at residues 308–328 (GVIEGLLSTLGPATVALLFCY). The Cytoplasmic segment spans residues 329–429 (GLKRKIGRRS…ITDVDYEDAM (101 aa)). 5 consecutive short sequence motifs (ITIM motif) follow at residues 354–359 (FTYLNS), 367–372 (PIYENV), 379–384 (EVYSLA), 410–415 (DIYSRL), and 423–428 (VDYEDA).

Interacts with ABL1. Interacts with GRB2 and SOS1. Interacts with SHIP-1/INPP5D. Phosphorylated on tyrosines upon activation. In terms of tissue distribution, primarily expressed in secondary lymphoid tissues by mature subsets of B-cells. Detected in spleen, lymph node, heart, skeletal muscle, kidney, liver and placenta. Specifically expressed by mature B lineage cells with higher expression in naive versus memory B-cells (at protein level).

The protein localises to the cell membrane. Type I transmembrane surface glycoprotein preferentially expressed by B-cells that regulates BCR-mediated signaling responses. Recruits ABL1 as the intracellular effector molecule to enhance B-cell activation. Also plays a negative role by suppressing ERK activation under homeostatic and BCR-stimulated conditions in a GRB2-dependent manner. The protein is Fc receptor-like protein 1 (FCRL1) of Homo sapiens (Human).